Reading from the N-terminus, the 337-residue chain is MEKPWRLWGPLEACLLSVCAWSWGFCRVSLLALILTFHLYGGFVLLGLILASLAGILYKFQDVLLYFPDQPSSSRLYVPMPTGIPHENVYIRTKDGIRLNLILLRYTGENPAGAPTILYFHGNAGNIGHRVPNALLMLVNLKANVVLVDYRGYGKSEGDPSEDGLYQDAEATLDYVMTRPDIDKTKVVLFGRSLGGAVAIRLASCNPHRVAAIMVENTFLSIPHMAATLFSFFPMRYLPLWCYKNKFLSYRHVVPCRMPSLFISGLSDQLIPPVMMKQLYELSPSRTKRLAIFPEGTHNDTWQCQGYFSALEQFMKELLKSHAREETTQGTASVTII.

A helical; Signal-anchor for type II membrane protein transmembrane segment spans residues 30 to 50 (LLALILTFHLYGGFVLLGLIL). Catalysis depends on charge relay system residues Ser193, Asp268, and His298. Asn299 carries an N-linked (GlcNAc...) asparagine glycan.

This sequence belongs to the serine esterase family.

It is found in the membrane. The chain is Protein ABHD13 from Danio rerio (Zebrafish).